Consider the following 133-residue polypeptide: Ribosome-binding factor A (133 aa).

It belongs to the RbfA family. In terms of assembly, monomer. Binds 30S ribosomal subunits, but not 50S ribosomal subunits or 70S ribosomes.

It is found in the cytoplasm. Its function is as follows. One of several proteins that assist in the late maturation steps of the functional core of the 30S ribosomal subunit. Associates with free 30S ribosomal subunits (but not with 30S subunits that are part of 70S ribosomes or polysomes). Required for efficient processing of 16S rRNA. May interact with the 5'-terminal helix region of 16S rRNA. In Pseudomonas fluorescens (strain Pf0-1), this protein is Ribosome-binding factor A.